Consider the following 418-residue polypeptide: Gamma-glutamyl phosphate reductase (418 aa).

This sequence belongs to the gamma-glutamyl phosphate reductase family.

Its subcellular location is the cytoplasm. It catalyses the reaction L-glutamate 5-semialdehyde + phosphate + NADP(+) = L-glutamyl 5-phosphate + NADPH + H(+). Its pathway is amino-acid biosynthesis; L-proline biosynthesis; L-glutamate 5-semialdehyde from L-glutamate: step 2/2. Its function is as follows. Catalyzes the NADPH-dependent reduction of L-glutamate 5-phosphate into L-glutamate 5-semialdehyde and phosphate. The product spontaneously undergoes cyclization to form 1-pyrroline-5-carboxylate. In Geotalea daltonii (strain DSM 22248 / JCM 15807 / FRC-32) (Geobacter daltonii), this protein is Gamma-glutamyl phosphate reductase.